The chain runs to 104 residues: Large ribosomal subunit protein uL24 (104 aa).

The protein belongs to the universal ribosomal protein uL24 family. In terms of assembly, part of the 50S ribosomal subunit.

Functionally, one of two assembly initiator proteins, it binds directly to the 5'-end of the 23S rRNA, where it nucleates assembly of the 50S subunit. Its function is as follows. One of the proteins that surrounds the polypeptide exit tunnel on the outside of the subunit. The protein is Large ribosomal subunit protein uL24 of Flavobacterium johnsoniae (strain ATCC 17061 / DSM 2064 / JCM 8514 / BCRC 14874 / CCUG 350202 / NBRC 14942 / NCIMB 11054 / UW101) (Cytophaga johnsonae).